We begin with the raw amino-acid sequence, 83 residues long: Protein L83L (83 aa).

The disordered stretch occupies residues 1–26; sequence MDTSLKKNNGALEADNKNYQNYKDEP.

The protein belongs to the asfivirus L83L family. In terms of assembly, interacts with host IL1B.

The protein localises to the host cytoplasm. Its function is as follows. May subvert the host innate immune response by interacting with host IL1B and interfering with its function. This chain is Protein L83L, found in Ornithodoros (relapsing fever ticks).